Here is a 483-residue protein sequence, read N- to C-terminus: Aspartyl/glutamyl-tRNA(Asn/Gln) amidotransferase subunit B (483 aa).

Belongs to the GatB/GatE family. GatB subfamily. In terms of assembly, heterotrimer of A, B and C subunits.

It catalyses the reaction L-glutamyl-tRNA(Gln) + L-glutamine + ATP + H2O = L-glutaminyl-tRNA(Gln) + L-glutamate + ADP + phosphate + H(+). The enzyme catalyses L-aspartyl-tRNA(Asn) + L-glutamine + ATP + H2O = L-asparaginyl-tRNA(Asn) + L-glutamate + ADP + phosphate + 2 H(+). Its function is as follows. Allows the formation of correctly charged Asn-tRNA(Asn) or Gln-tRNA(Gln) through the transamidation of misacylated Asp-tRNA(Asn) or Glu-tRNA(Gln) in organisms which lack either or both of asparaginyl-tRNA or glutaminyl-tRNA synthetases. The reaction takes place in the presence of glutamine and ATP through an activated phospho-Asp-tRNA(Asn) or phospho-Glu-tRNA(Gln). The chain is Aspartyl/glutamyl-tRNA(Asn/Gln) amidotransferase subunit B from Thermomicrobium roseum (strain ATCC 27502 / DSM 5159 / P-2).